Here is a 123-residue protein sequence, read N- to C-terminus: Large ribosomal subunit protein uL18 (123 aa).

Belongs to the universal ribosomal protein uL18 family. In terms of assembly, part of the 50S ribosomal subunit; part of the 5S rRNA/L5/L18/L25 subcomplex. Contacts the 5S and 23S rRNAs.

This is one of the proteins that bind and probably mediate the attachment of the 5S RNA into the large ribosomal subunit, where it forms part of the central protuberance. This Wolbachia pipientis subsp. Culex pipiens (strain wPip) protein is Large ribosomal subunit protein uL18.